The primary structure comprises 102 residues: Iron-sulfur cluster assembly protein CyaY (102 aa).

This sequence belongs to the frataxin family.

Involved in iron-sulfur (Fe-S) cluster assembly. May act as a regulator of Fe-S biogenesis. The chain is Iron-sulfur cluster assembly protein CyaY from Mannheimia succiniciproducens (strain KCTC 0769BP / MBEL55E).